The primary structure comprises 358 residues: Adenosine deaminase (358 aa).

The Zn(2+) site is built by histidine 14 and histidine 16. The substrate site is built by histidine 16, aspartate 18, and glycine 183. Histidine 212 provides a ligand contact to Zn(2+). Residue glutamate 215 is the Proton donor of the active site. Residue aspartate 294 participates in Zn(2+) binding. Aspartate 295 serves as a coordination point for substrate.

This sequence belongs to the metallo-dependent hydrolases superfamily. Adenosine and AMP deaminases family. Requires Zn(2+) as cofactor.

It is found in the cell membrane. It localises to the cell junction. Its subcellular location is the cytoplasmic vesicle lumen. The protein localises to the cytoplasm. The protein resides in the lysosome. The enzyme catalyses adenosine + H2O + H(+) = inosine + NH4(+). The catalysed reaction is 2'-deoxyadenosine + H2O + H(+) = 2'-deoxyinosine + NH4(+). In terms of biological role, catalyzes the hydrolytic deamination of adenosine and 2-deoxyadenosine. Plays an important role in purine metabolism and in adenosine homeostasis. Modulates signaling by extracellular adenosine, and so contributes indirectly to cellular signaling events. May act as a positive regulator of T-cell coactivation. In Xenopus tropicalis (Western clawed frog), this protein is Adenosine deaminase (ada).